We begin with the raw amino-acid sequence, 1413 residues long: DNA-directed RNA polymerase subunit beta' (1413 aa).

4 residues coordinate Zn(2+): cysteine 70, cysteine 72, cysteine 85, and cysteine 88. Mg(2+) contacts are provided by aspartate 460, aspartate 462, and aspartate 464. Cysteine 819, cysteine 893, cysteine 900, and cysteine 903 together coordinate Zn(2+). A disordered region spans residues 1393 to 1413 (EAFEFGTPETPAAEQTPHTNE).

This sequence belongs to the RNA polymerase beta' chain family. The RNAP catalytic core consists of 2 alpha, 1 beta, 1 beta' and 1 omega subunit. When a sigma factor is associated with the core the holoenzyme is formed, which can initiate transcription. The cofactor is Mg(2+). It depends on Zn(2+) as a cofactor.

It catalyses the reaction RNA(n) + a ribonucleoside 5'-triphosphate = RNA(n+1) + diphosphate. Functionally, DNA-dependent RNA polymerase catalyzes the transcription of DNA into RNA using the four ribonucleoside triphosphates as substrates. In Paraburkholderia phymatum (strain DSM 17167 / CIP 108236 / LMG 21445 / STM815) (Burkholderia phymatum), this protein is DNA-directed RNA polymerase subunit beta'.